The primary structure comprises 539 residues: Glucans biosynthesis protein D (539 aa).

The segment at residues 1-31 (MHRRNLLKASMALAAYTGLSASGLLAARAWA) is a signal peptide (tat-type signal).

This sequence belongs to the OpgD/OpgG family. Post-translationally, predicted to be exported by the Tat system. The position of the signal peptide cleavage has not been experimentally proven.

Its subcellular location is the periplasm. It functions in the pathway glycan metabolism; osmoregulated periplasmic glucan (OPG) biosynthesis. Probably involved in the control of the structural glucose backbone of osmoregulated periplasmic glucans (OPGs). The sequence is that of Glucans biosynthesis protein D from Pseudomonas fluorescens (strain ATCC BAA-477 / NRRL B-23932 / Pf-5).